We begin with the raw amino-acid sequence, 387 residues long: Succinate--CoA ligase [ADP-forming] subunit beta (387 aa).

Positions 9–236 constitute an ATP-grasp domain; sequence KELFAKHNVP…RDATDPLELK (228 aa). ATP contacts are provided by residues K45, 52–54, S94, and E99; that span reads GRG. 2 residues coordinate Mg(2+): N191 and D205. Substrate-binding positions include N256 and 318–320; that span reads GIT.

This sequence belongs to the succinate/malate CoA ligase beta subunit family. As to quaternary structure, heterotetramer of two alpha and two beta subunits. Mg(2+) is required as a cofactor.

The catalysed reaction is succinate + ATP + CoA = succinyl-CoA + ADP + phosphate. It catalyses the reaction GTP + succinate + CoA = succinyl-CoA + GDP + phosphate. It functions in the pathway carbohydrate metabolism; tricarboxylic acid cycle; succinate from succinyl-CoA (ligase route): step 1/1. Functionally, succinyl-CoA synthetase functions in the citric acid cycle (TCA), coupling the hydrolysis of succinyl-CoA to the synthesis of either ATP or GTP and thus represents the only step of substrate-level phosphorylation in the TCA. The beta subunit provides nucleotide specificity of the enzyme and binds the substrate succinate, while the binding sites for coenzyme A and phosphate are found in the alpha subunit. This Mycobacterium sp. (strain JLS) protein is Succinate--CoA ligase [ADP-forming] subunit beta.